Reading from the N-terminus, the 255-residue chain is MLDKVKNVIIVLSGKGGVGKSTVSTQLALALRHSGHKVGLLDIDLCGPSVPFLLGLEGSNIYQCDEGWVPIYTDASKTLAVMSIGFLLKNRTDPVIWRGPKKTMMIRQFLTDVKWEELDYLIIDTPPGTSDEHITVMECMREVPCNGAIIVTTPQSVALDDVRKEITFCKKTGIKLLGIVEIFVCPNCTNCTNIFSSNGGVELAHLVQIPHLGTLPIDPRVGVLAGSTASVLDELPDSPTAQVLRGIVQHLVALT.

ATP is bound at residue 14–21 (GKGGVGKS). The [4Fe-4S] cluster site is built by C185 and C188.

This sequence belongs to the Mrp/NBP35 ATP-binding proteins family. NUBP2/CFD1 subfamily. In terms of assembly, heterotetramer of 2 Nubp1 and 2 Nubp2 chains. It depends on [4Fe-4S] cluster as a cofactor.

It localises to the cytoplasm. Its function is as follows. Component of the cytosolic iron-sulfur (Fe/S) protein assembly (CIA) machinery. Required for maturation of extramitochondrial Fe-S proteins. The Nubp1-Nubp2 heterotetramer forms a Fe-S scaffold complex, mediating the de novo assembly of an Fe-S cluster and its transfer to target apoproteins. The polypeptide is Cytosolic Fe-S cluster assembly factor Nubp2 homolog (Drosophila persimilis (Fruit fly)).